We begin with the raw amino-acid sequence, 118 residues long: T cell receptor gamma variable 8 (118 aa).

The first 17 residues, 1-17 (MLLALALLLAFLPPASQ), serve as a signal peptide directing secretion. The region spanning 18–118 (KSSNLEGRTK…GVYYCATWDR (101 aa)) is the Ig-like domain. Cys41 and Cys113 are oxidised to a cystine.

As to quaternary structure, gamma-delta TR is a heterodimer composed of a gamma and delta chain; disulfide-linked. The gamma-delta TR is associated with the transmembrane signaling CD3 coreceptor proteins following the stoichiometry: a single gamma-delta TR heterodimer associates with one CD3D-CD3E heterodimer, one CD3G-CD3E heterodimer and one CD247 homodimer forming a stable octameric structure. Upon activation, gamma-delta TR complex associates with FCER1G to initiate intracellular signaling.

Its subcellular location is the cell membrane. Its function is as follows. V region of the variable domain of T cell receptor (TR) gamma chain that participates in the antigen recognition. Gamma-delta TRs recognize a variety of self and foreign non-peptide antigens frequently expressed at the epithelial boundaries between the host and external environment, including endogenous lipids presented by MH-like protein CD1D and phosphoantigens presented by butyrophilin-like molecule BTN3A1. Upon antigen recognition induces rapid, innate-like immune responses involved in pathogen clearance and tissue repair. Binding of gamma-delta TR complex to antigen triggers phosphorylation of immunoreceptor tyrosine-based activation motifs (ITAMs) in the CD3 chains by the LCK and FYN kinases, allowing the recruitment, phosphorylation, and activation of ZAP70 that facilitates phosphorylation of the scaffolding proteins LCP2 and LAT. This lead to the formation of a supramolecular signalosome that recruits the phospholipase PLCG1, resulting in calcium mobilization and ERK activation, ultimately leading to T cell expansion and differentiation into effector cells. Gamma-delta TRs are produced through somatic rearrangement of a limited repertoire of variable (V), diversity (D), and joining (J) genes. The potential diversity of gamma-delta TRs is conferred by the unique ability to rearrange (D) genes in tandem and to utilize all three reading frames. The combinatorial diversity is considerably increased by the sequence exonuclease trimming and random nucleotide (N) region additions which occur during the V-(D)-J rearrangements. The sequence is that of T cell receptor gamma variable 8 from Homo sapiens (Human).